A 426-amino-acid polypeptide reads, in one-letter code: Histidine--tRNA ligase (426 aa).

The protein belongs to the class-II aminoacyl-tRNA synthetase family. In terms of assembly, homodimer.

It is found in the cytoplasm. The enzyme catalyses tRNA(His) + L-histidine + ATP = L-histidyl-tRNA(His) + AMP + diphosphate + H(+). The chain is Histidine--tRNA ligase from Pseudoalteromonas translucida (strain TAC 125).